The sequence spans 467 residues: Protein PHOSPHATE STARVATION RESPONSE 3 (467 aa).

Residues 227 to 266 (MSLPVSSCSDQEDLQDARSPAKVQLSSSRSSSGTASCNKP) are disordered. Residues 262-322 (SCNKPRLRWT…HLQKYRLAKY (61 aa)) form the HTH myb-type domain. A DNA-binding region (H-T-H motif) is located at residues 293–318 (PKGVLKLMKVEGLTIYHIKSHLQKYR). The segment covering 327–337 (KEDKKQEEKKT) has biased composition (basic and acidic residues). Disordered stretches follow at residues 327-353 (KEDK…KSAQ) and 400-467 (RESI…VHDE). The span at 402-412 (SISSMTSTTEG) shows a compositional bias: polar residues. Basic and acidic residues-rich tracts occupy residues 419–428 (PMEKTEDKAE) and 438–467 (RITD…VHDE).

It localises to the nucleus. Transcription factor involved in phosphate starvation signaling. Binds to P1BS, an imperfect palindromic sequence 5'-GNATATNC-3', to promote the expression of inorganic phosphate (Pi) starvation-responsive genes. Functionally redundant with PHR1 and PHR2 in regulating Pi starvation response and Pi homeostasis. The sequence is that of Protein PHOSPHATE STARVATION RESPONSE 3 from Oryza sativa subsp. indica (Rice).